We begin with the raw amino-acid sequence, 485 residues long: Aspartyl/glutamyl-tRNA(Asn/Gln) amidotransferase subunit B (485 aa).

Belongs to the GatB/GatE family. GatB subfamily. Heterotrimer of A, B and C subunits.

The enzyme catalyses L-glutamyl-tRNA(Gln) + L-glutamine + ATP + H2O = L-glutaminyl-tRNA(Gln) + L-glutamate + ADP + phosphate + H(+). It catalyses the reaction L-aspartyl-tRNA(Asn) + L-glutamine + ATP + H2O = L-asparaginyl-tRNA(Asn) + L-glutamate + ADP + phosphate + 2 H(+). Functionally, allows the formation of correctly charged Asn-tRNA(Asn) or Gln-tRNA(Gln) through the transamidation of misacylated Asp-tRNA(Asn) or Glu-tRNA(Gln) in organisms which lack either or both of asparaginyl-tRNA or glutaminyl-tRNA synthetases. The reaction takes place in the presence of glutamine and ATP through an activated phospho-Asp-tRNA(Asn) or phospho-Glu-tRNA(Gln). This is Aspartyl/glutamyl-tRNA(Asn/Gln) amidotransferase subunit B from Opitutus terrae (strain DSM 11246 / JCM 15787 / PB90-1).